The primary structure comprises 172 residues: MDLKDKIRVIQGFPKEGISFKDVTTILQEKEAFKYTIDTLVEELKDKNVDVVVGPEARGFLFGAPLAYALGAGFVPVRKKGKLPSTTISSKYELEYGSDELEMHKDSIKPGQRVVIADDLLATGGTICSVIEMIESLGGEIVSINFLIELTDLKGREKLGKYDISSLVQYDI.

The protein belongs to the purine/pyrimidine phosphoribosyltransferase family. In terms of assembly, homodimer.

It localises to the cytoplasm. The enzyme catalyses AMP + diphosphate = 5-phospho-alpha-D-ribose 1-diphosphate + adenine. It functions in the pathway purine metabolism; AMP biosynthesis via salvage pathway; AMP from adenine: step 1/1. Functionally, catalyzes a salvage reaction resulting in the formation of AMP, that is energically less costly than de novo synthesis. In Clostridium tetani (strain Massachusetts / E88), this protein is Adenine phosphoribosyltransferase.